Here is a 622-residue protein sequence, read N- to C-terminus: DNA mismatch repair protein MutL (622 aa).

Basic and acidic residues predominate over residues 399 to 414 (SSQNFHPDENDYRAEE). Positions 399–422 (SSQNFHPDENDYRAEEASPAEENP) are disordered.

This sequence belongs to the DNA mismatch repair MutL/HexB family.

Its function is as follows. This protein is involved in the repair of mismatches in DNA. It is required for dam-dependent methyl-directed DNA mismatch repair. May act as a 'molecular matchmaker', a protein that promotes the formation of a stable complex between two or more DNA-binding proteins in an ATP-dependent manner without itself being part of a final effector complex. This chain is DNA mismatch repair protein MutL, found in Phocaeicola vulgatus (strain ATCC 8482 / DSM 1447 / JCM 5826 / CCUG 4940 / NBRC 14291 / NCTC 11154) (Bacteroides vulgatus).